Consider the following 99-residue polypeptide: MQITDVKIRKVATEGRMKALASITLDHEFVVHDLRIIEGSSGLFVAMPSKRTPEGIFRDIAHPINGEMRQKVEAAVLETYSNMDVEILDPQHVSYGTHE.

The protein belongs to the SpoVG family.

Its function is as follows. Could be involved in septation. This is Putative septation protein SpoVG from Exiguobacterium sp. (strain ATCC BAA-1283 / AT1b).